A 1007-amino-acid chain; its full sequence is Glutamate receptor ionotropic, delta-2 (1007 aa).

Residues 1 to 23 (MEVFPLLLFLSFCWSRTWDLATA) form the signal peptide. Residues 24–345 (DSIIHIGAIF…NAFHKKLEDR (322 aa)) are interaction with CBLN1 homotrimer. The Extracellular segment spans residues 24-566 (DSIIHIGAIF…DMFACLAPFD (543 aa)). 3 disulfides stabilise this stretch: C83-C355, C99-C131, and C298-C310. An N-linked (GlcNAc...) asparagine glycan is attached at N293. N426 is a glycosylation site (N-linked (GlcNAc...) asparagine). Residues E531, V534, and D535 each contribute to the Ca(2+) site. Residues 567-587 (LSLWACIAGTVLLVGLLVYLL) traverse the membrane as a helical segment. Topologically, residues 588-635 (NWLNPPRLQMGSMTSTTLYNSMWFVYGSFVQQGGEVPYTTLATRMMMG) are cytoplasmic. A helical membrane pass occupies residues 636-656 (AWWLFALIVISSYTANLAAFL). Residues 657 to 830 (TITRIESSIQ…QKGGALDIKS (174 aa)) lie on the Extracellular side of the membrane. 2 N-linked (GlcNAc...) asparagine glycosylation sites follow: N713 and N716. Ca(2+)-binding residues include D753, D755, and S757. Residues 831–851 (LAGVFCILAAGIVLSCLIAVL) traverse the membrane as a helical segment. At 852 to 1007 (ETWWSRRKGS…GNDPDRGTSI (156 aa)) the chain is on the cytoplasmic side. S883 carries the post-translational modification Phosphoserine. T886 carries the phosphothreonine modification. S890 bears the Phosphoserine mark. The interval 921 to 991 (DFRNTHITTT…MSSIPYQPTP (71 aa)) is interaction with AP4M1. A PDZ-binding motif is present at residues 1005–1007 (TSI). Position 1006 is a phosphoserine (S1006).

This sequence belongs to the glutamate-gated ion channel (TC 1.A.10.1) family. GRID2 subfamily. Tetramer; dimer of dimers. Interacts with EML2, MAGI2 (via PDZ domains) and AP4M1. Interacts with BECN1, GOPC, GRID2IP, SHANK1 and SHANK2. Interacts with CBLN2, but not with CBLN4. Interacts with CBLN1 (via C1q domain); the interaction is CBLN1-NRX1 complex formation-dependent; CBLN1-binding is calcium-independent; CBLN1 hexamers anchor GRID2 N-terminal domain dimers to monomeric NRXN1 isoform beta; promotes synaptogenesis and mediates the D-Serine-dependent long term depression signals and AMPA receptor endocytosis. Expressed selectively in cerebellar Purkinje cells where it is localized in dendritic spines.

Its subcellular location is the postsynaptic cell membrane. It catalyses the reaction Ca(2+)(in) = Ca(2+)(out). It carries out the reaction Na(+)(in) = Na(+)(out). Its function is as follows. Member of the ionotropic glutamate receptor family, which plays a crucial role in synaptic organization and signal transduction in the central nervous system. Although it shares structural features with ionotropic glutamate receptors, does not bind glutamate as a primary ligand. Promotes synaptogenesis and mediates the D-Serine-dependent long term depression signals and AMPA receptor endocytosis of cerebellar parallel fiber-Purkinje cell (PF-PC) synapses through the NRX1B-CBLN1-GRID2 triad complex. In the presence of neurexins and cerebellins, forms cation-selective channels that are proposed to be gated by glycine and D-serine. However, recent research disputes this ligand-gated cation channel activity. Cation-selective ion channel activity can be triggered by GRM1 in Purkinje cells. In Mus musculus (Mouse), this protein is Glutamate receptor ionotropic, delta-2 (Grid2).